The primary structure comprises 328 residues: UPF0104 membrane protein AF_2231 (328 aa).

Transmembrane regions (helical) follow at residues N31–L51, I116–S136, F139–Y159, L221–L241, A245–L265, and M277–W297.

It belongs to the UPF0104 family.

The protein localises to the cell membrane. The protein is UPF0104 membrane protein AF_2231 of Archaeoglobus fulgidus (strain ATCC 49558 / DSM 4304 / JCM 9628 / NBRC 100126 / VC-16).